Reading from the N-terminus, the 782-residue chain is Phosphoribosylformylglycinamidine synthase subunit PurL (782 aa).

His-50 is an active-site residue. Residues Tyr-53 and Lys-92 each contribute to the ATP site. Glu-94 is a Mg(2+) binding site. Residues 95–98 (SHNH) and Arg-117 each bind substrate. His-96 functions as the Proton acceptor in the catalytic mechanism. Asp-118 lines the Mg(2+) pocket. Gln-241 lines the substrate pocket. Asp-269 is a Mg(2+) binding site. 313 to 315 (ESQ) provides a ligand contact to substrate. Residues Asp-520 and Gly-557 each coordinate ATP. Residue Asn-558 coordinates Mg(2+). A substrate-binding site is contributed by Ser-560.

This sequence belongs to the FGAMS family. In terms of assembly, monomer. Part of the FGAM synthase complex composed of 1 PurL, 1 PurQ and 2 PurS subunits.

It localises to the cytoplasm. It catalyses the reaction N(2)-formyl-N(1)-(5-phospho-beta-D-ribosyl)glycinamide + L-glutamine + ATP + H2O = 2-formamido-N(1)-(5-O-phospho-beta-D-ribosyl)acetamidine + L-glutamate + ADP + phosphate + H(+). It participates in purine metabolism; IMP biosynthesis via de novo pathway; 5-amino-1-(5-phospho-D-ribosyl)imidazole from N(2)-formyl-N(1)-(5-phospho-D-ribosyl)glycinamide: step 1/2. Functionally, part of the phosphoribosylformylglycinamidine synthase complex involved in the purines biosynthetic pathway. Catalyzes the ATP-dependent conversion of formylglycinamide ribonucleotide (FGAR) and glutamine to yield formylglycinamidine ribonucleotide (FGAM) and glutamate. The FGAM synthase complex is composed of three subunits. PurQ produces an ammonia molecule by converting glutamine to glutamate. PurL transfers the ammonia molecule to FGAR to form FGAM in an ATP-dependent manner. PurS interacts with PurQ and PurL and is thought to assist in the transfer of the ammonia molecule from PurQ to PurL. The sequence is that of Phosphoribosylformylglycinamidine synthase subunit PurL from Cyanothece sp. (strain PCC 7425 / ATCC 29141).